Consider the following 1013-residue polypeptide: PHD finger protein 20-like protein 1 (1013 aa).

One can recognise a Tudor 1 domain in the interval 11–71; sequence ITFEIGARLE…SNRLRPLERP (61 aa). Glycyl lysine isopeptide (Lys-Gly) (interchain with G-Cter in SUMO2) cross-links involve residues lysine 75 and lysine 79. A Tudor 2 domain is found at 85–141; it reads FDFKAGEEVLARWTDCRYYPAKIEAINKEGTFTVQFYDGVIRCLKRMHIKAMPEDAK. 4 disordered regions span residues 183–206, 309–368, 389–454, and 482–511; these read AKNK…RDGG, EQAI…TPKS, VINK…QSSV, and VTGS…FANP. Residues 315 to 346 show a composition bias toward polar residues; the sequence is KPQSQKKNEAVISSSANTQKPALLSSTLSSGK. At serine 368 the chain carries Phosphoserine. Over residues 404-415 the composition is skewed to basic residues; it reads PCKHSERRRRSQ. Serine 432 carries the phosphoserine modification. Residues 443 to 453 are compositionally biased toward low complexity; that stretch reads SISSQNQQQSS. The span at 496–505 shows a compositional bias: basic and acidic residues; it reads ECPREEKEET. Lysine 530 is covalently cross-linked (Glycyl lysine isopeptide (Lys-Gly) (interchain with G-Cter in SUMO2)). Residues 533–565 show a composition bias toward basic and acidic residues; the sequence is KKVKLEEKTSTAFGKRKEKDKEKKEKRDKDHYK. The tract at residues 533-585 is disordered; the sequence is KKVKLEEKTSTAFGKRKEKDKEKKEKRDKDHYKPKQKKKKKKKKKSKQHDYSD. Residues 566-579 are compositionally biased toward basic residues; sequence PKQKKKKKKKKKSK. The PHD-type zinc finger occupies 681–729; the sequence is IVRCICELDEENGFMIQCEECLCWQHSVCMGLLEDSIPEQYICYICRDP. The span at 824 to 852 shows a compositional bias: basic and acidic residues; it reads RKITPQDRANSEGKECVQNHKEPALRMEE. The tract at residues 824–911 is disordered; sequence RKITPQDRAN…LLYKNRGVSE (88 aa). The span at 854-878 shows a compositional bias: polar residues; it reads YITSEHSYQKPQSFSQDCQSLTDPG. Positions 879–892 are enriched in acidic residues; sequence SSDDDDASSFEEDG. Lysine 905 carries the post-translational modification N6-acetyllysine.

Interacts with methylated DNMT1 (DNMT1K142me1). Interacts with SOX2.

The protein localises to the nucleus. Its function is as follows. Is a negative regulator of proteasomal degradation of a set of methylated proteins, including DNMT1 and SOX2. Involved in the maintainance of embryonic stem cells pluripotency, through the regulation of SOX2 levels. The sequence is that of PHD finger protein 20-like protein 1 (Phf20l1) from Mus musculus (Mouse).